A 264-amino-acid chain; its full sequence is Undecaprenyl-diphosphatase (264 aa).

8 helical membrane-spanning segments follow: residues 7–27 (IVIPIIIGIIQGITEFFPVSS), 45–65 (TKILEIFVQLGSTISVFLFFY), 86–106 (IHVLISILPTMFLGLIFYNKI), 109–129 (LFNPTNVMYALILGGFFLIIA), 145–165 (INLVQSLIIGCFQTLCLYPGF), 186–206 (VNFSFIISIPLIAGASVLDLI), 215–235 (LNIPYLFSGFTISFIISFLLI), and 244–264 (KVSLTFFGIYRFLIAGIIYFI).

Belongs to the UppP family.

It is found in the cell membrane. It catalyses the reaction di-trans,octa-cis-undecaprenyl diphosphate + H2O = di-trans,octa-cis-undecaprenyl phosphate + phosphate + H(+). In terms of biological role, catalyzes the dephosphorylation of undecaprenyl diphosphate (UPP). Confers resistance to bacitracin. This chain is Undecaprenyl-diphosphatase, found in Buchnera aphidicola subsp. Schizaphis graminum (strain Sg).